The sequence spans 305 residues: Mas-related G-protein coupled receptor member A7 (305 aa).

At 1-17 the chain is on the extracellular side; the sequence is MDETSPRSIDIESLIPN. A helical membrane pass occupies residues 18-38; sequence LMIIIFGLVGLTGNAIVLWLL. The Cytoplasmic segment spans residues 39–46; sequence GFCLHRNA. Residues 47–67 form a helical membrane-spanning segment; that stretch reads FLVYILNLALADFLFLLCHFI. Topologically, residues 68 to 81 are extracellular; that stretch reads NSAMFLLKVPIPNG. The chain crosses the membrane as a helical span at residues 82 to 102; sequence IFVYCFYTIKMVLYITGLSML. The Cytoplasmic portion of the chain corresponds to 103-129; it reads SAISTERCLSVLCPIWYHCRRPEHTST. A helical transmembrane segment spans residues 130-150; that stretch reads VMCAVIWIFSVLICILKEYFC. The Extracellular segment spans residues 151–167; the sequence is DFFGTKLGNYYVCQASN. A helical membrane pass occupies residues 168–188; the sequence is FFMGAYLMFLFVVLCLSTLAL. At 189–211 the chain is on the cytoplasmic side; it reads LARLFCGAEKMKFTRLFVTIMLT. A helical membrane pass occupies residues 212–232; that stretch reads ILVFLLCGLPWGFFWFLLIWI. Topologically, residues 233–244 are extracellular; sequence KGGFSVLDYRLY. The chain crosses the membrane as a helical span at residues 245–265; sequence LASIVLTVVNSCANPIIYFFV. At 266-305 the chain is on the cytoplasmic side; it reads GSFRHRLKHQTLKMVLQSALQDTPETHENMVEMSRIKAEQ.

Belongs to the G-protein coupled receptor 1 family. Mas subfamily. As to expression, expressed in a subset of sensory neurons that includes nociceptors. Expressed in the subclass of non-peptidergic sensory neurons that are IB4(+) and VR1(-).

It localises to the cell membrane. Its function is as follows. Orphan receptor. May be a receptor for RFamide-family neuropeptides such as NPFF and NPAF, which are analgesic in vivo. May regulate nociceptor function and/or development, including the sensation or modulation of pain. The chain is Mas-related G-protein coupled receptor member A7 (Mrgpra7) from Mus musculus (Mouse).